Reading from the N-terminus, the 336-residue chain is Sodium/bile acid cotransporter 7 (336 aa).

The Cytoplasmic portion of the chain corresponds to 1 to 10; sequence MGLIARVRKE. A helical membrane pass occupies residues 11 to 31; sequence WFIIGIVLVITFAKLQPSVGV. Topologically, residues 32-37 are extracellular; it reads KGGPLH. A helical transmembrane segment spans residues 38–58; the sequence is PEITITYVAVSVIFFNSGLSL. The Cytoplasmic segment spans residues 59 to 71; it reads KTEELASALMHVK. Residues 72-92 form a helical membrane-spanning segment; it reads LHFFVQTFTLVFFPIAIWLLL. Residues 93–116 lie on the Extracellular side of the membrane; the sequence is KVLALTAINEWLLRGLQTVACMPP. A helical membrane pass occupies residues 117-137; sequence PVSSAVILTKAVGGNEAAAIF. Position 138 (N138) is a topological domain, cytoplasmic. Residues 139–159 form a helical membrane-spanning segment; that stretch reads SAFGSFLGIVVTPLLLLVFLG. Topologically, residues 160–163 are extracellular; the sequence is SSSS. The helical transmembrane segment at 164–184 threads the bilayer; it reads VPFTSIFSQLFMTVVVPLIVG. The Cytoplasmic segment spans residues 185–201; it reads QVCRRFLRECLDRRKPP. A helical membrane pass occupies residues 202 to 222; that stretch reads FGAVSSVVLLMIIYSTFCDTF. Residues 223 to 233 lie on the Extracellular side of the membrane; sequence NNPNIELDHLS. Residues 234-254 form a helical membrane-spanning segment; that stretch reads LLTVVFIIFSIQLSFMALIFF. Residues 255–270 lie on the Cytoplasmic side of the membrane; sequence LSTRKSSGFSAADSVA. A helical membrane pass occupies residues 271 to 291; it reads IMFCATHKSLTLGIPMLKIVF. Residues 292 to 298 are Extracellular-facing; sequence EGYEHLS. A helical transmembrane segment spans residues 299–319; the sequence is LISVPLLIYHPAQILLGSVLL. The Cytoplasmic portion of the chain corresponds to 320 to 336; it reads PSIKTWMSGRQKTLTPI.

This sequence belongs to the bile acid:sodium symporter (BASS) (TC 2.A.28) family.

It is found in the cell membrane. The protein localises to the endoplasmic reticulum membrane. It localises to the golgi apparatus membrane. Its function is as follows. Involved in teeth and skeletal development. Has an essential role in the biosynthesis and trafficking of glycosaminoglycans and glycoproteins to produce a proper functioning extracellular matrix. Required for extracellular matrix mineralization. Also involved in the regulation of cellular calcium homeostasis. Does not show transport activity towards bile acids or steroid sulfates. This chain is Sodium/bile acid cotransporter 7 (slc10a7), found in Danio rerio (Zebrafish).